Consider the following 277-residue polypeptide: MEMO1 family protein CTN_0605 (277 aa).

It belongs to the MEMO1 family.

This is MEMO1 family protein CTN_0605 from Thermotoga neapolitana (strain ATCC 49049 / DSM 4359 / NBRC 107923 / NS-E).